Here is a 656-residue protein sequence, read N- to C-terminus: Ankyrin repeat and SAM domain-containing protein 3 (656 aa).

The interaction with NEK7 stretch occupies residues 1 to 422 (MSELSDEASE…AESSPQTQRA (422 aa)). A phosphoserine mark is found at serine 2 and serine 5. 6 ANK repeats span residues 34 to 64 (DVPLDLHTAASIGQYEVVKECVQRRELDLNK), 68 to 97 (GGWTPLMYASYIGHDTIVHLLLEAGVSVNV), 101 to 130 (EGQTPLMLASSCGNESIAYFLLQQGAELEM), 134 to 163 (QGWTALFHCTSAGHQHMVRFLLDSGANANV), 168 to 197 (CGFTPLMEAAAAGHEIIVQYFLNHGVKVDA), and 201 to 220 (SGATARMLAKQYGHMKIVAL). Asparagine 96 bears the 3-hydroxyasparagine mark. 5 positions are modified to phosphoserine: serine 201, serine 225, serine 243, serine 244, and serine 245. Disordered regions lie at residues 235–265 (SPEKYEDLSSSDESCPAPQRQRPCRKKGVSI) and 277–312 (GIGLGGRAPRPRYEQAPPRGYVTFNSSGENPLEEEG). Threonine 319 carries the post-translational modification Phosphothreonine. A phosphoserine mark is found at serine 320, serine 368, serine 371, and serine 375. The disordered stretch occupies residues 346–425 (GPVQSSSSSE…SPQTQRAPYS (80 aa)). An SAM domain is found at 425-488 (SGPQDLAALL…TSAIARWHSS (64 aa)). Residues 501–526 (ADRLEAEMQELAIQLHKRCEEVEATR) adopt a coiled-coil conformation. Serine 541 carries the phosphoserine modification.

Homooligomer. Interacts (via SAM domain) with ANKS6 (via SAM domain). Interacts with BICC1. Interacts with NPHP1. Interacts with NEK8. Interacts with HIF1AN. Interacts with NEK7; this interaction alters the subcellular distribution of NEK7 by preventing its nuclear translocation. Post-translationally, hydroxylated at Asn-96, most probably by HIF1AN. Phosphorylations at Ser-5, Ser-225, Thr-319, Ser-320, Ser-368 and Ser-371 occur in a NEK7-dependent manner. In terms of processing, polyubiquitinated.

The protein resides in the cell projection. The protein localises to the cilium. It localises to the cytoplasm. May be involved in vasopressin signaling in the kidney. This chain is Ankyrin repeat and SAM domain-containing protein 3 (ANKS3), found in Homo sapiens (Human).